Reading from the N-terminus, the 357-residue chain is Phosphoserine aminotransferase (357 aa).

Residue Arg41 coordinates L-glutamate. Pyridoxal 5'-phosphate-binding positions include 76-77 (GT), Trp102, Thr152, Asp171, and Gln194. At Lys195 the chain carries N6-(pyridoxal phosphate)lysine. Residue 235-236 (NT) participates in pyridoxal 5'-phosphate binding.

Belongs to the class-V pyridoxal-phosphate-dependent aminotransferase family. SerC subfamily. In terms of assembly, homodimer. It depends on pyridoxal 5'-phosphate as a cofactor.

The protein localises to the cytoplasm. It catalyses the reaction O-phospho-L-serine + 2-oxoglutarate = 3-phosphooxypyruvate + L-glutamate. It carries out the reaction 4-(phosphooxy)-L-threonine + 2-oxoglutarate = (R)-3-hydroxy-2-oxo-4-phosphooxybutanoate + L-glutamate. It functions in the pathway amino-acid biosynthesis; L-serine biosynthesis; L-serine from 3-phospho-D-glycerate: step 2/3. In terms of biological role, catalyzes the reversible conversion of 3-phosphohydroxypyruvate to phosphoserine and of 3-hydroxy-2-oxo-4-phosphonooxybutanoate to phosphohydroxythreonine. This chain is Phosphoserine aminotransferase, found in Limosilactobacillus fermentum (strain NBRC 3956 / LMG 18251) (Lactobacillus fermentum).